We begin with the raw amino-acid sequence, 387 residues long: S-adenosylmethionine synthase (387 aa).

Residue histidine 16 coordinates ATP. A Mg(2+)-binding site is contributed by aspartate 18. Residue glutamate 44 coordinates K(+). The L-methionine site is built by glutamate 57 and glutamine 100. Positions 100 to 110 are flexible loop; sequence QSPDIAQGVDR. ATP is bound by residues 167–169, 232–233, aspartate 241, 247–248, alanine 264, and lysine 268; these read DAK, RF, and RK. Position 241 (aspartate 241) interacts with L-methionine. Lysine 272 is an L-methionine binding site.

This sequence belongs to the AdoMet synthase family. Homotetramer; dimer of dimers. Requires Mg(2+) as cofactor. It depends on K(+) as a cofactor.

Its subcellular location is the cytoplasm. It carries out the reaction L-methionine + ATP + H2O = S-adenosyl-L-methionine + phosphate + diphosphate. It functions in the pathway amino-acid biosynthesis; S-adenosyl-L-methionine biosynthesis; S-adenosyl-L-methionine from L-methionine: step 1/1. Functionally, catalyzes the formation of S-adenosylmethionine (AdoMet) from methionine and ATP. The overall synthetic reaction is composed of two sequential steps, AdoMet formation and the subsequent tripolyphosphate hydrolysis which occurs prior to release of AdoMet from the enzyme. This is S-adenosylmethionine synthase from Cupriavidus metallidurans (strain ATCC 43123 / DSM 2839 / NBRC 102507 / CH34) (Ralstonia metallidurans).